A 268-amino-acid chain; its full sequence is Tryptophan synthase alpha chain (268 aa).

Active-site proton acceptor residues include Glu-49 and Asp-60.

It belongs to the TrpA family. In terms of assembly, tetramer of two alpha and two beta chains.

It carries out the reaction (1S,2R)-1-C-(indol-3-yl)glycerol 3-phosphate + L-serine = D-glyceraldehyde 3-phosphate + L-tryptophan + H2O. It participates in amino-acid biosynthesis; L-tryptophan biosynthesis; L-tryptophan from chorismate: step 5/5. In terms of biological role, the alpha subunit is responsible for the aldol cleavage of indoleglycerol phosphate to indole and glyceraldehyde 3-phosphate. This Salmonella agona (strain SL483) protein is Tryptophan synthase alpha chain.